Here is a 492-residue protein sequence, read N- to C-terminus: E3 ubiquitin-protein ligase TRIM35 (492 aa).

Met1 carries the post-translational modification N-acetylmethionine. Ser4 and Ser8 each carry phosphoserine. An RING-type zinc finger spans residues 21–61 (CAVCYDPFRDAVTLRCGHNFCRGCVSRCWEVQVSPTCPVCK). A B box-type zinc finger spans residues 96-137 (RFSRVCRLHRGQLSLFCLEDKELLCCSCQADPRHQGHRVQPV). Cys101, His104, Cys123, and His129 together coordinate Zn(2+). The stretch at 210 to 249 (AEETRQKQLLADEKMKQLTEETEVLAHEIERLQMEMKEDD) forms a coiled coil. A B30.2/SPRY domain is found at 283–486 (YLGSLQYRVW…LRICPLHISV (204 aa)).

As to quaternary structure, interacts with PKM isoform M2, but not isoform M1; this interaction may compete with that between PKM and FGFR1, and hence reduces FGFR1-dependent tyrosine phosphorylation of PKM. Interacts with IRF7; this interaction promotes IRF7 proteasomal degradation. Interacts with TRAF3; this interaction promotes TRAF3 activation.

It localises to the cytoplasm. The protein resides in the nucleus. The enzyme catalyses S-ubiquitinyl-[E2 ubiquitin-conjugating enzyme]-L-cysteine + [acceptor protein]-L-lysine = [E2 ubiquitin-conjugating enzyme]-L-cysteine + N(6)-ubiquitinyl-[acceptor protein]-L-lysine.. It functions in the pathway protein modification; protein ubiquitination. Functionally, E3 ubiquitin-protein ligase that participates in multiple biological processes including cell death, glucose metabolism, and in particular, the innate immune response. Mediates 'Lys-63'-linked polyubiquitination of TRAF3 thereby promoting type I interferon production via RIG-I signaling pathway. Can also catalyze 'Lys-48'-linked polyubiquitination and proteasomal degradation of viral proteins such as influenza virus PB2. Acts as a negative feedback regulator of TLR7- and TLR9-triggered signaling. Mechanistically, promotes the 'Lys-48'-linked ubiquitination of IRF7 and induces its degradation via a proteasome-dependent pathway. Reduces FGFR1-dependent tyrosine phosphorylation of PKM, inhibiting PKM-dependent lactate production, glucose metabolism, and cell growth. In Pongo abelii (Sumatran orangutan), this protein is E3 ubiquitin-protein ligase TRIM35 (TRIM35).